The sequence spans 402 residues: Advanced glycosylation end product-specific receptor (402 aa).

A signal peptide spans 1–22; sequence MPAGTAARAWVLVLALWGAVAG. The 87-residue stretch at 23–109 folds into the Ig-like V-type domain; it reads GQNITARIGE…ATNRRGKEVK (87 aa). Over 23–340 the chain is Extracellular; it reads GQNITARIGE…VGESGLGTLA (318 aa). N-linked (GlcNAc...) asparagine glycosylation is found at Asn25 and Asn80. Disulfide bonds link Cys38-Cys98 and Cys143-Cys206. 2 Ig-like C2-type domains span residues 123-219 and 233-315; these read PEIV…RPLN and PEGI…PPVS. A disordered region spans residues 295-332; sequence GTYSCVATHPSHGPQESPPVSIRVTETGDEGPAEGSVG. The chain crosses the membrane as a helical span at residues 341 to 361; sequence LALGILGGLGVVALLVGAILW. Residues 362–402 are Cytoplasmic-facing; it reads RKRQPRREERKAPESQEDEEERAELNQSEEAEMPENGAGGP. The tract at residues 365–402 is disordered; the sequence is QPRREERKAPESQEDEEERAELNQSEEAEMPENGAGGP. 2 positions are modified to phosphoserine; by ATM: Ser376 and Ser389. Residues 376–394 are compositionally biased toward acidic residues; that stretch reads SQEDEEERAELNQSEEAEM.

Constitutive homodimer; disulfide-linked. Forms homooligomers. Interacts with S100A1 and APP. Interacts with S100B, S100A12 and S100A14. Interacts with TIRAP. Interacts with HMGB1. Interacts with LGP2; this interaction plays an important role in AGER-mediated pro-inflammatory responses and cytokine release. Interacts with double-strand break repair protein MRE11 which is a core component of the MRN complex; the interaction enhances MRE11 endonuclease activity and promotes DNA repair. Interacts with the MCM2-7 complex via interaction with complex member MCM2; the interaction is increased following DNA replication stress and stabilizes the MCM2-7 complex at replication forks. Post-translationally, phosphorylated on its cytoplasmic domain by PKCzeta/PRKCZ upon ligand binding. Phosphorylated by ATM following DNA damage. Targeted by the ubiquitin E3 ligase subunit FBXO10 to mediate its ubiquitination and degradation. Isoform 1: Expressed at higher levels in the coronary arterioles in type 2 diabetic mice (at protein level). Endothelial cells. Expressed in lung, kidney, brain and heart. Most prevalent isoform with the highest level in heart. Isoform 2: Expressed in brain, lung, kidney and small intestine with the highest level in lung. Expressed in brain, lung, kidney and small intestine with the highest level in small intestine (at protein level). Detected in neurons of the cerebrum, bronchial epithelium, endothelial cells, tubular cells of kidney and epithelial cells of small intestine (at protein level). Expression is increased in the kidney of diabetic wild-type mice (at protein level), but not in the other tissues. Expressed only in kidney. Expression is increased in the kidney of diabetic mice. Isoform 3: Expressed in lung, kidney and heart. The second most prevalent isoform with the highest level in lung. Not expressed in brain. Isoform 4: Expressed at very low level in lung only. Isoform 5: Expressed at very low level in lung only. Isoform 6: Expressed at very low level in lung only. Isoform 7: Expressed at very low level in heart only. Isoform 8: Expressed at very low level in lung only. Isoform 9: Expressed at very low level in heart only. Isoform 10: Expressed in lung, brain, heart and kidney with a very high level in kidney. Isoform 11: Expressed in brain, kidney and heart. Not expressed in lung. Isoform 12: Expressed at very low level in lung and kidney. Isoform 13: Expressed at very low level in lung only.

The protein localises to the cell membrane. It is found in the cell projection. It localises to the phagocytic cup. Its subcellular location is the early endosome. The protein resides in the nucleus. The protein localises to the secreted. Its function is as follows. Cell surface pattern recognition receptor that senses endogenous stress signals with a broad ligand repertoire including advanced glycation end products, S100 proteins, high-mobility group box 1 protein/HMGB1, amyloid beta/APP oligomers, nucleic acids, histones, phospholipids and glycosaminoglycans. Advanced glycosylation end products are nonenzymatically glycosylated proteins which accumulate in vascular tissue in aging and at an accelerated rate in diabetes. These ligands accumulate at inflammatory sites during the pathogenesis of various diseases including diabetes, vascular complications, neurodegenerative disorders and cancers, and RAGE transduces their binding into pro-inflammatory responses. Upon ligand binding, uses TIRAP and MYD88 as adapters to transduce the signal ultimately leading to the induction of inflammatory cytokines IL6, IL8 and TNFalpha through activation of NF-kappa-B. Interaction with S100A12 on endothelium, mononuclear phagocytes, and lymphocytes triggers cellular activation, with generation of key pro-inflammatory mediators. Interaction with S100B after myocardial infarction may play a role in myocyte apoptosis by activating ERK1/2 and p53/TP53 signaling. Contributes to the translocation of amyloid-beta peptide (ABPP) across the cell membrane from the extracellular to the intracellular space in cortical neurons. ABPP-initiated RAGE signaling, especially stimulation of p38 mitogen-activated protein kinase (MAPK), has the capacity to drive a transport system delivering ABPP as a complex with RAGE to the intraneuronal space. Participates in endothelial albumin transcytosis together with HMGB1 through the RAGE/SRC/Caveolin-1 pathway, leading to endothelial hyperpermeability. Mediates the loading of HMGB1 in extracellular vesicles (EVs) that shuttle HMGB1 to hepatocytes by transferrin-mediated endocytosis and subsequently promote hepatocyte pyroptosis by activating the NLRP3 inflammasome. Binds to DNA and promotes extracellular hypomethylated DNA (CpG DNA) uptake by cells via the endosomal route to activate inflammatory responses. Mediates phagocytosis by non-professional phagocytes (NPP) and this is enhanced by binding to ligands including RNA, DNA, HMGB1 and histones. Promotes NPP-mediated phagocytosis of Saccharomyces cerevisiae spores by binding to RNA attached to the spore wall. Also promotes NPP-mediated phagocytosis of apoptotic cells. Following DNA damage, recruited to DNA double-strand break sites where it colocalizes with the MRN repair complex via interaction with double-strand break repair protein MRE11. Enhances the endonuclease activity of MRE11, promoting the end resection of damaged DNA. Promotes DNA damage repair in trophoblasts which enhances trophoblast invasion and contributes to placental development and maintenance. Protects cells from DNA replication stress by localizing to damaged replication forks where it stabilizes the MCM2-7 complex and promotes faithful progression of the replication fork. Functionally, is able to advanced glycosylation end product (AGE)-induce nuclear factor NF-kappa-B activation. Down-regulates receptor for advanced glycosylation end products (RAGE)-ligand induced signaling through various MAPK pathways including ERK1/2, p38 and SAPK/JNK. Significantly affects tumor cell properties through decreasing cell migration, invasion, adhesion and proliferation, and increasing cellular apoptosis. Exhibits drastic inhibition on tumorigenesis in vitro. The chain is Advanced glycosylation end product-specific receptor (Ager) from Mus musculus (Mouse).